The sequence spans 241 residues: Large ribosomal subunit protein uL30 (241 aa).

The disordered stretch occupies residues Met1–Lys32. The span at Thr9–Ala26 shows a compositional bias: basic and acidic residues.

It belongs to the universal ribosomal protein uL30 family. Component of the large ribosomal subunit. Mature ribosomes consist of a small (40S) and a large (60S) subunit. The 40S subunit contains about 32 different proteins and 1 molecule of RNA (18S). The 60S subunit contains 45 different proteins and 3 molecules of RNA (25S, 5.8S and 5S).

The protein localises to the cytoplasm. Its function is as follows. Component of the ribosome, a large ribonucleoprotein complex responsible for the synthesis of proteins in the cell. The small ribosomal subunit (SSU) binds messenger RNAs (mRNAs) and translates the encoded message by selecting cognate aminoacyl-transfer RNA (tRNA) molecules. The large subunit (LSU) contains the ribosomal catalytic site termed the peptidyl transferase center (PTC), which catalyzes the formation of peptide bonds, thereby polymerizing the amino acids delivered by tRNAs into a polypeptide chain. The nascent polypeptides leave the ribosome through a tunnel in the LSU and interact with protein factors that function in enzymatic processing, targeting, and the membrane insertion of nascent chains at the exit of the ribosomal tunnel. The polypeptide is Large ribosomal subunit protein uL30 (Candida albicans (strain SC5314 / ATCC MYA-2876) (Yeast)).